A 301-amino-acid polypeptide reads, in one-letter code: Glutathione transport system permease protein GsiD (301 aa).

6 consecutive transmembrane segments (helical) span residues 37-57, 103-123, 141-161, 162-182, 220-240, and 264-284; these read VAVA…WAQY, LAAG…LGLL, VLFA…MGSG, MANV…RLVR, IVVF…SLSF, and VIAP…VLAF. Positions 99-288 constitute an ABC transmembrane type-1 domain; that stretch reads TRISLAAGIF…LTVLAFNLLG (190 aa).

Belongs to the binding-protein-dependent transport system permease family. The complex is composed of two ATP-binding proteins (GsiA), two transmembrane proteins (GsiC and GsiD) and a solute-binding protein (GsiB).

Its subcellular location is the cell inner membrane. Its function is as follows. Part of the ABC transporter complex GsiABCD involved in glutathione import. Probably responsible for the translocation of the substrate across the membrane. The protein is Glutathione transport system permease protein GsiD of Pectobacterium atrosepticum (strain SCRI 1043 / ATCC BAA-672) (Erwinia carotovora subsp. atroseptica).